The sequence spans 229 residues: Non-structural protein P8 (229 aa).

2 consecutive transmembrane segments (helical) span residues 119–139 (IIHMTLLIAAVVALLTSVCTL) and 162–182 (SLNPMLGVVNLGATFLMMVCA).

This sequence belongs to the orbivirus NS3 family. Forms homooligomers via coiled-coil motif. Interacts with host OPTN; this interaction inhibits innate immune response.

It localises to the host cell membrane. Its subcellular location is the host Golgi apparatus. Its function is as follows. Plays a role in the inhibition of host innate immune response. Interacts with host OPTN and thus inhibits the recruitment of TBK1 to the host Golgi apparatus. In turn, downstream partner IRF3 cannot be activated and IFN-beta production is impaired. Functionally, facilitates viral particle release either by increasing plasma membrane permeability through a viroporin-like activity or by viral budding. In Antilocapra americana (Pronghorn), this protein is Non-structural protein P8 (Segment-10).